A 585-amino-acid polypeptide reads, in one-letter code: Eukaryotic translation initiation factor 3 subunit D (585 aa).

Positions 43-60 are enriched in basic and acidic residues; the sequence is LGRMADWTGDGKDRDRGG. 2 disordered regions span residues 43–62 and 109–152; these read LGRM…GGRQ and RGGG…NRSA. Positions 109–130 are enriched in gly residues; that stretch reads RGGGTVFRGRGQRGVGQRGGRA. The tract at residues 300–314 is RNA gate; the sequence is SIDLVTVNENAADAP. The tract at residues 560 to 585 is disordered; the sequence is VPPNTFEEDDEAAEEQEEKAEEESEE. The segment covering 565-585 has biased composition (acidic residues); the sequence is FEEDDEAAEEQEEKAEEESEE.

The protein belongs to the eIF-3 subunit D family. Component of the eukaryotic translation initiation factor 3 (eIF-3) complex.

Its subcellular location is the cytoplasm. In terms of biological role, mRNA cap-binding component of the eukaryotic translation initiation factor 3 (eIF-3) complex, which is involved in protein synthesis of a specialized repertoire of mRNAs and, together with other initiation factors, stimulates binding of mRNA and methionyl-tRNAi to the 40S ribosome. The eIF-3 complex specifically targets and initiates translation of a subset of mRNAs involved in cell proliferation. In the eIF-3 complex, eif3d specifically recognizes and binds the 7-methylguanosine cap of a subset of mRNAs. The polypeptide is Eukaryotic translation initiation factor 3 subunit D (Neosartorya fischeri (strain ATCC 1020 / DSM 3700 / CBS 544.65 / FGSC A1164 / JCM 1740 / NRRL 181 / WB 181) (Aspergillus fischerianus)).